The following is a 495-amino-acid chain: UDP-N-acetylmuramoyl-L-alanyl-D-glutamate--2,6-diaminopimelate ligase (495 aa).

Residues L28, S30, and 45 to 47 (HRV) each bind UDP-N-acetyl-alpha-D-muramoyl-L-alanyl-D-glutamate. 117 to 123 (GTNGKTT) contacts ATP. Residues N158, 159-160 (TT), S186, Q192, and R194 each bind UDP-N-acetyl-alpha-D-muramoyl-L-alanyl-D-glutamate. N6-carboxylysine is present on K226. Meso-2,6-diaminopimelate is bound by residues R394, 418–421 (DNPR), G469, and E473. A Meso-diaminopimelate recognition motif motif is present at residues 418-421 (DNPR).

Belongs to the MurCDEF family. MurE subfamily. Requires Mg(2+) as cofactor. Carboxylation is probably crucial for Mg(2+) binding and, consequently, for the gamma-phosphate positioning of ATP.

The protein localises to the cytoplasm. The catalysed reaction is UDP-N-acetyl-alpha-D-muramoyl-L-alanyl-D-glutamate + meso-2,6-diaminopimelate + ATP = UDP-N-acetyl-alpha-D-muramoyl-L-alanyl-gamma-D-glutamyl-meso-2,6-diaminopimelate + ADP + phosphate + H(+). It functions in the pathway cell wall biogenesis; peptidoglycan biosynthesis. Catalyzes the addition of meso-diaminopimelic acid to the nucleotide precursor UDP-N-acetylmuramoyl-L-alanyl-D-glutamate (UMAG) in the biosynthesis of bacterial cell-wall peptidoglycan. The polypeptide is UDP-N-acetylmuramoyl-L-alanyl-D-glutamate--2,6-diaminopimelate ligase (Histophilus somni (strain 129Pt) (Haemophilus somnus)).